Here is a 405-residue protein sequence, read N- to C-terminus: Indoleamine 2,3-dioxygenase acdA (405 aa).

Residue histidine 312 participates in heme binding.

This sequence belongs to the indoleamine 2,3-dioxygenase family. Heme is required as a cofactor.

It catalyses the reaction L-tryptophan + O2 = N-formyl-L-kynurenine. Its pathway is secondary metabolite biosynthesis. Its function is as follows. Indoleamine 2,3-dioxygenase; part of the gene cluster that mediates the biosynthesis of aspcandine, a pyrrolobenzazepine alkaloid. Initially, the indoleamine 2,3-dioxygenase acdA accepts L-tryptophan and performs the oxidative opening of the indole ring to yield N'-formyl-L-kynurenine, which undergoes the spontaneous deformylation reaction to provide L-kynurenine. The kynurenine 3-monooxygenase acdD then hydroxylates L-kynurenine to afford 3-hydroxy-L-kynurenine. 3-hydroxy-L-kynurenine is activated by the A domain of the NRPS-PKS acdB and subsequently loaded onto the enzyme. The KS domain conducts the decarboxylative condensation of the 3-hydroxy-L-kynurenyl and malonyl moieties, and subsequent nucleophilic attacks by the two amino groups would occur nonenzymatically at two distinct positions, achieving the chain release and the construction of the tricyclic system. Finally, a dehydration reaction completes the biosynthesis to yield aspcandine. This chain is Indoleamine 2,3-dioxygenase acdA, found in Aspergillus candidus.